A 121-amino-acid polypeptide reads, in one-letter code: MNNAPHLYFAWQQLVEKSQLMLRLATEEQWDELIASEMAYVNAVQEIAHLTEEVAPSTTMQEQLRPMLLLILDNESKVKQLLQIRMDELAKLVGQSSVQKSVLSAYGDQGGFVLAPQDNLF.

The required for homodimerization stretch occupies residues 1–50; it reads MNNAPHLYFAWQQLVEKSQLMLRLATEEQWDELIASEMAYVNAVQEIAHL. Positions 60 to 98 are fliD binding; sequence MQEQLRPMLLLILDNESKVKQLLQIRMDELAKLVGQSSV.

The protein belongs to the FliT family. As to quaternary structure, homodimer. Interacts with FliD and FlhC.

It is found in the cytoplasm. The protein localises to the cytosol. Dual-function protein that regulates the transcription of class 2 flagellar operons and that also acts as an export chaperone for the filament-capping protein FliD. As a transcriptional regulator, acts as an anti-FlhDC factor; it directly binds FlhC, thus inhibiting the binding of the FlhC/FlhD complex to class 2 promoters, resulting in decreased expression of class 2 flagellar operons. As a chaperone, effects FliD transition to the membrane by preventing its premature polymerization, and by directing it to the export apparatus. This chain is Flagellar protein FliT, found in Escherichia coli O6:K15:H31 (strain 536 / UPEC).